The following is a 259-amino-acid chain: Phosphatidylinositol transfer protein 2 (259 aa).

The stretch at 231–259 forms a coiled coil; it reads LTIEDIRKIEEETKAELAKKLEENKAANK.

This sequence belongs to the PtdIns transfer protein family. PI transfer class IIA subfamily.

The protein localises to the cytoplasm. The protein resides in the golgi apparatus. Catalyzes the transfer of PtdIns and phosphatidylcholine between membranes. This chain is Phosphatidylinositol transfer protein 2 (pitB), found in Dictyostelium discoideum (Social amoeba).